The sequence spans 438 residues: Forkhead box protein J1 (438 aa).

Residues 123 to 217 (KPPYSYATLI…MNGAMKKRRL (95 aa)) constitute a DNA-binding region (fork-head).

The protein belongs to the FOXJ1 family.

The protein localises to the nucleus. In terms of biological role, key transcription factor required for motile ciliogenesis. Activates genes essential for motile cilia formation and function. This is Forkhead box protein J1 from Xenopus tropicalis (Western clawed frog).